The chain runs to 341 residues: S-adenosylmethionine:tRNA ribosyltransferase-isomerase (341 aa).

This sequence belongs to the QueA family. Monomer.

Its subcellular location is the cytoplasm. The enzyme catalyses 7-aminomethyl-7-carbaguanosine(34) in tRNA + S-adenosyl-L-methionine = epoxyqueuosine(34) in tRNA + adenine + L-methionine + 2 H(+). It functions in the pathway tRNA modification; tRNA-queuosine biosynthesis. Its function is as follows. Transfers and isomerizes the ribose moiety from AdoMet to the 7-aminomethyl group of 7-deazaguanine (preQ1-tRNA) to give epoxyqueuosine (oQ-tRNA). The protein is S-adenosylmethionine:tRNA ribosyltransferase-isomerase of Staphylococcus saprophyticus subsp. saprophyticus (strain ATCC 15305 / DSM 20229 / NCIMB 8711 / NCTC 7292 / S-41).